The following is a 209-amino-acid chain: Octanoyltransferase (209 aa).

Residues 30-209 (DHEPEIIYLV…IQTEFNKIFK (180 aa)) form the BPL/LPL catalytic domain. Substrate is bound by residues 69-76 (RGGKFTFH), 143-145 (AIG), and 156-158 (GVA). Residue cysteine 174 is the Acyl-thioester intermediate of the active site.

The protein belongs to the LipB family.

Its subcellular location is the cytoplasm. The enzyme catalyses octanoyl-[ACP] + L-lysyl-[protein] = N(6)-octanoyl-L-lysyl-[protein] + holo-[ACP] + H(+). It participates in protein modification; protein lipoylation via endogenous pathway; protein N(6)-(lipoyl)lysine from octanoyl-[acyl-carrier-protein]: step 1/2. Functionally, catalyzes the transfer of endogenously produced octanoic acid from octanoyl-acyl-carrier-protein onto the lipoyl domains of lipoate-dependent enzymes. Lipoyl-ACP can also act as a substrate although octanoyl-ACP is likely to be the physiological substrate. The protein is Octanoyltransferase of Rickettsia rickettsii (strain Iowa).